Consider the following 999-residue polypeptide: MASNATFEVEIYGNTTKFENSLKGVNTAMSGLRGEAKNLRDALKLDPTNTDKMAQLQKNLQTQLGLSRDKATKLKQELSSVDKSSPAGQKKWLQLTRDLGTAETQANRLEGEIKQVEGAISSGSWDIDAKMDTKGVNSGIDGMKSRFSGLREIAVGVFRQIGSSAVSAVGNGLKGWVSDAMDTQKAMISLQNTLKFKGNGQDFDYVSKSMQTLAKDTNANTEDTLKLSTTFIGLGDSAKTAVGKTEALVKANQAFGGTGEQLKGVVQAYGQMSASGKVSAENINQLTDNNTALGSALKSTVMEMNPALKQYGSFASASEKGAISVEMLDKAMQKLGGAGGGAVTTIGDAWDSFNETLSLALLPTLDALTPIISSIIDKMAGWGESAGKALDSIVKYVKELWGALEKNGALSSLSKIWDGLKSTFGSVLSIIGQLIESFAGIDSKTGESAGSVENVSKTIANLAKGLADVIKKIADFAKKFSESKGAIDTLKTSLVALTAGFVAFKIGSGIITAISAFKKLQTAIQAGTGVMGAFNAVMAINPFVALGIAIAAIVAGLVYFFTQTETGKKAWASFVDFLKSAWDGIVSFFSGIGQWFADIWNGAVDGAKGIWQGLVDWFSGIVQGVQNIWNGITTFFTTLWTTVVTGIQTAWAGVTGFFTGLWDGIVNVVTTVFTTISSLVTGAYNWFVTTFQPLISFYKSIFGLVGSVINLAFQLILAIIRGAYQLVIGAWNGISGFFGVIFNAVSSVVSTVFSAIGSFAGSAWNVLVGVWNAVAGFFGGIFNAVKGVVSSAFSAIGSFASSAWGVVSSIWSAVSGFFSGIFNAVRSVVSGVFSALGGFASNAWGAITGIFSGVADFFSGVFDGAKNIVSGVFEAFGNFASNAWNAITGVFNGIGSFFSDIFGGVKNTIDSVLGGVTDTINNIKGSIDWVASKVGGLFKGSMVVGLTDVNLSSSGYGLSTNSVSSDNRTYNTFNVQGGAGQDVSNLARAIRREFELGRA.

It belongs to the skunalikevirus tape measure protein family.

The protein resides in the virion. Its function is as follows. Probable tape measure protein. Serves as a base for tail tube protein polymerization and acts as a template for tail length determination. This chain is Probable tape measure protein, found in Lactococcus lactis (Lactococcus lactis bacteriophage SK1).